The following is a 182-amino-acid chain: Peptidyl-tRNA hydrolase (182 aa).

Tyr14 lines the tRNA pocket. His19 (proton acceptor) is an active-site residue. The tRNA site is built by Phe64, Asn66, and Asn112.

This sequence belongs to the PTH family. As to quaternary structure, monomer.

The protein localises to the cytoplasm. The enzyme catalyses an N-acyl-L-alpha-aminoacyl-tRNA + H2O = an N-acyl-L-amino acid + a tRNA + H(+). In terms of biological role, hydrolyzes ribosome-free peptidyl-tRNAs (with 1 or more amino acids incorporated), which drop off the ribosome during protein synthesis, or as a result of ribosome stalling. Catalyzes the release of premature peptidyl moieties from peptidyl-tRNA molecules trapped in stalled 50S ribosomal subunits, and thus maintains levels of free tRNAs and 50S ribosomes. The polypeptide is Peptidyl-tRNA hydrolase (Wolbachia pipientis wMel).